The primary structure comprises 456 residues: PTS system sucrose-specific EIIBC component (456 aa).

The PTS EIIB type-1 domain occupies 4–87 (EQISRSLLPL…IQAAGISESS (84 aa)). Catalysis depends on cysteine 26, which acts as the Phosphocysteine intermediate; for EIIB activity. The PTS EIIC type-1 domain occupies 107–456 (RLLSNIFVPI…LTLKYKTDAE (350 aa)). 10 helical membrane passes run 112–132 (IFVPIIPAIVASGLLMGLLGM), 144–164 (ALYIMLDMCSSAAFIILPILI), 181–201 (TLGGILTHPALTNAWGVAAGF), 209–229 (IEVAMIGYQGTVFPVLLAVWF), 247–267 (LILTPFLTVIISGFIALLLIG), 288–308 (AGWLAGLLFGGLYSVIVITGI), 329–349 (FLLPIWAMANVAQGGACFAVW), 360–380 (ITLPSAFSAMLGITEAAIFGI), 388–408 (FIAALVGGAAGGAWVVSMHVY), and 428–448 (LLNYIIGMAIAFAVAFALSLT).

The protein resides in the cell inner membrane. The catalysed reaction is N(pros)-phospho-L-histidyl-[protein](out) + sucrose = sucrose 6(G)-phosphate(in) + L-histidyl-[protein]. Functionally, the phosphoenolpyruvate-dependent sugar phosphotransferase system (sugar PTS), a major carbohydrate active transport system, catalyzes the phosphorylation of incoming sugar substrates concomitantly with their translocation across the cell membrane. This system is involved in sucrose transport. The protein is PTS system sucrose-specific EIIBC component of Klebsiella pneumoniae.